Consider the following 342-residue polypeptide: Autoinducer 2 import system permease protein LsrC (342 aa).

Residues 1-13 (MLKFIQNNREITA) are Periplasmic-facing. A helical transmembrane segment spans residues 14 to 34 (LLAVVLLFVLPGFLDRQYLSV). The Cytoplasmic portion of the chain corresponds to 35–38 (QTLT). The chain crosses the membrane as a helical span at residues 39-59 (MVYSSAQILILLAMGATLVML). Topologically, residues 60-69 (TRNIDVSVGS) are periplasmic. The chain crosses the membrane as a helical span at residues 70–90 (ITGMCAVLLGMLLNAGYSLPV). The Cytoplasmic segment spans residues 91 to 92 (AC). A helical membrane pass occupies residues 93–113 (VATLLLGLLAGFFNGVLVAWL). A topological domain (periplasmic) is located at residue lysine 114. A helical membrane pass occupies residues 115–135 (IPAIVATLGTLGLYRGIMLLW). The Cytoplasmic segment spans residues 136–154 (TGGKWIEGLPAELKQLSAP). Residues 155–175 (LLFGVSAIGWLTIILVAFMAW) traverse the membrane as a helical segment. Residues 176–212 (LLAKTAFGRSFYVTGDNLQGARQLGVRTEAIRIVAFS) lie on the Periplasmic side of the membrane. The helical transmembrane segment at 213-233 (LNGCMAALAGIVFASQIGFIP) threads the bilayer. The Cytoplasmic segment spans residues 234 to 251 (NQTGTGLEMKAIAACVLG). The chain crosses the membrane as a helical span at residues 252–272 (GISLLGGSGAIIGAVLGAWFL). Topologically, residues 273 to 283 (TQIDSVLVLLR) are periplasmic. Residues 284–304 (IPAWWNDFIAGMVLLAVLVFD) traverse the membrane as a helical segment. The Cytoplasmic portion of the chain corresponds to 305-342 (GRLRCALERNLRRQKYARFMMPPPPVKPASSGKKREAA).

It belongs to the binding-protein-dependent transport system permease family. AraH/RbsC subfamily. The complex is composed of two ATP-binding proteins (LsrA), two transmembrane proteins (LsrC and LsrD) and a solute-binding protein (LsrB).

The protein localises to the cell inner membrane. In terms of biological role, part of the ABC transporter complex LsrABCD involved in autoinducer 2 (AI-2) import. Probably responsible for the translocation of the substrate across the membrane. The polypeptide is Autoinducer 2 import system permease protein LsrC (lsrC) (Escherichia coli (strain SMS-3-5 / SECEC)).